Here is a 160-residue protein sequence, read N- to C-terminus: Putative pre-16S rRNA nuclease (160 aa).

The protein belongs to the YqgF nuclease family.

The protein localises to the cytoplasm. In terms of biological role, could be a nuclease involved in processing of the 5'-end of pre-16S rRNA. The polypeptide is Putative pre-16S rRNA nuclease (Rhodopseudomonas palustris (strain BisB5)).